A 152-amino-acid chain; its full sequence is SsrA-binding protein (152 aa).

Belongs to the SmpB family.

The protein resides in the cytoplasm. In terms of biological role, required for rescue of stalled ribosomes mediated by trans-translation. Binds to transfer-messenger RNA (tmRNA), required for stable association of tmRNA with ribosomes. tmRNA and SmpB together mimic tRNA shape, replacing the anticodon stem-loop with SmpB. tmRNA is encoded by the ssrA gene; the 2 termini fold to resemble tRNA(Ala) and it encodes a 'tag peptide', a short internal open reading frame. During trans-translation Ala-aminoacylated tmRNA acts like a tRNA, entering the A-site of stalled ribosomes, displacing the stalled mRNA. The ribosome then switches to translate the ORF on the tmRNA; the nascent peptide is terminated with the 'tag peptide' encoded by the tmRNA and targeted for degradation. The ribosome is freed to recommence translation, which seems to be the essential function of trans-translation. This chain is SsrA-binding protein, found in Rickettsia bellii (strain RML369-C).